The sequence spans 528 residues: 4-chlorobenzoate--CoA ligase (528 aa).

Residues 161-169 (TSGTTGLPK), 300-305 (NIYGTT), and N409 each bind ATP.

It belongs to the ATP-dependent AMP-binding enzyme family. In terms of assembly, homodimer. The cofactor is Mg(2+).

It carries out the reaction 4-chlorobenzoate + ATP + CoA = 4-chlorobenzoyl-CoA + AMP + diphosphate. It functions in the pathway xenobiotic degradation; 4-chlorobenzoate degradation; 4-hydroxybenzoate from 4-chlorobenzoate: step 2/3. With respect to regulation, unaffected by 5,5'-dithiobis-(2-nitrobenzoic acid), 4-chloromercuribenzoate and sodium azide. Inhibited by Cu(2+), Fe(2+) and Zn(2+). Unaffected by Na(+), K(+) and Li(+). Its function is as follows. Catalyzes the formation of chlorobenzoyl-CoA via a 2 step reaction. First 4-chlorobenzoyl is adenylated by ATP, followed by acyl transfer from the 4-chlorobenzoyl-AMP intermediate to CoA. Benzoate, 4-bromobenzoate, 4-iodobenzoate and 4-methylbenzoate also act as substrates. Inactive towards 4-aminobenzoate, 4-hydroxybenzoate, 2-aminobenzoate, 2,3-dihydroxybenzoate, 4-coumarate and the aliphatic carboxylic acids palmate, caproate, laurate and butyrate. Negligible activity is detected when ATP is replaced by UTP, CTP or GTP as cosubstrate. This Pseudomonas sp. (strain CBS-3) protein is 4-chlorobenzoate--CoA ligase.